Here is a 169-residue protein sequence, read N- to C-terminus: Large ribosomal subunit protein uL10 (169 aa).

It belongs to the universal ribosomal protein uL10 family. In terms of assembly, part of the ribosomal stalk of the 50S ribosomal subunit. The N-terminus interacts with L11 and the large rRNA to form the base of the stalk. The C-terminus forms an elongated spine to which L12 dimers bind in a sequential fashion forming a multimeric L10(L12)X complex.

Forms part of the ribosomal stalk, playing a central role in the interaction of the ribosome with GTP-bound translation factors. The chain is Large ribosomal subunit protein uL10 from Rickettsia massiliae (strain Mtu5).